The sequence spans 204 residues: Proteasome subunit beta 1 (204 aa).

Residues 1–9 (MSYEYGTGA) constitute a propeptide, removed in mature form; by autocatalysis. Thr-10 functions as the Nucleophile in the catalytic mechanism.

This sequence belongs to the peptidase T1B family. The 20S proteasome core is composed of 14 alpha and 14 beta subunits that assemble into four stacked heptameric rings, resulting in a barrel-shaped structure. The two inner rings, each composed of seven catalytic beta subunits, are sandwiched by two outer rings, each composed of seven alpha subunits. The catalytic chamber with the active sites is on the inside of the barrel. Has a gated structure, the ends of the cylinder being occluded by the N-termini of the alpha-subunits. Is capped at one or both ends by the proteasome regulatory ATPase, PAN.

The protein resides in the cytoplasm. It carries out the reaction Cleavage of peptide bonds with very broad specificity.. Its activity is regulated as follows. The formation of the proteasomal ATPase PAN-20S proteasome complex, via the docking of the C-termini of PAN into the intersubunit pockets in the alpha-rings, triggers opening of the gate for substrate entry. Interconversion between the open-gate and close-gate conformations leads to a dynamic regulation of the 20S proteasome proteolysis activity. Its function is as follows. Component of the proteasome core, a large protease complex with broad specificity involved in protein degradation. The chain is Proteasome subunit beta 1 from Hyperthermus butylicus (strain DSM 5456 / JCM 9403 / PLM1-5).